The chain runs to 1169 residues: Rabankyrin-5 (1169 aa).

Alanine 2 bears the N-acetylalanine mark. A BTB domain is found at 68-130 (SDLKIKVGDR…IYTDELEFRE (63 aa)). ANK repeat units follow at residues 217 to 247 (KTEYPLHKAIKVEREDVVFLYLIEMDSQLPG), 255 to 284 (NGDLALDLALSRRLESIATTLVSHKADVDM), 288 to 317 (SGWSLLHKGIQRGDLFAATFLIKNGAFVNA), 322 to 362 (AQET…NPNM), and 366 to 396 (KGRTPLHVSIMAGNEYVFSQLLQCKQLDLEL). Phosphoserine is present on serine 270. An NPF motif is present at residues 421–423 (NPF). 16 ANK repeats span residues 490–519 (WGETPLHTACRHGLANLTAELLQQGANPNL), 542–572 (HLQTPLHMAIAYNHPDVVSVILEQKANALHA), 588–617 (RDQTVLGLALWTGMHTIAAQLLGSGAAIND), 621–650 (DGQTLLHMAIQRQDSKSALFLLEHQADINV), 654–683 (DGETALQLAIRNQLPLVVDAICTRGADMSV), 687–716 (KGNPPLWLALANNLEDIASTLVRHGCDATC), 724–753 (CLQTLLHRAIDENNEPTACFLIRSGCDVNS), 769–798 (DGQTPLHLAASWGLEETVQCLLEFGANVNA), 802–832 (EGRTPIHVAISSQHGVIIQLLVSHPDIHLNV), 836–865 (QGLTPFACAMTFKNNKSAEAILKRESGAAE), 870–899 (KGRNFLHVAVQNSDIESVLFLISVHANVNS), 905–934 (SKLTPLHLAVQAGSEIIVRNLLLAGAKVNE), 938–967 (HRQTALHLAAQQDLPTICSVLLENGVDFAA), 971–1001 (NGNNALHLAVMHGRLNNIRVLLTECTVDAEA), 1005–1037 (RGQSPLHILGQYGKENAAAIFDLFLECMPGYPL), and 1043–1072 (DGSTVLLLAYMKGNANLCRAIVRSGARLGV). Residues 650–759 (VRTQDGETAL…DVNSPRQPGA (110 aa)) are interaction with RHOD and RAB5A. The FYVE-type zinc-finger motif lies at 1104 to 1164 (WCDGSYCYEC…VCNICFDVLT (61 aa)). Residues cysteine 1110, cysteine 1113, cysteine 1126, cysteine 1129, cysteine 1134, cysteine 1137, cysteine 1156, and cysteine 1159 each coordinate Zn(2+).

In terms of assembly, interacts with RAB5A (in GTP-bound form). Interacts with RHOD (independent of GTP-loaded status). Interacts with EHD1. Interacts with VPS26A; the interaction is independent of EHD1 and is indicative for an association with the cargo recognition subcomplex of the retromer complex. As to expression, high expression in whole adult brain and intermediate expression in all other tissues and specific brain regions examined, including fetal brain.

The protein localises to the cytoplasm. Its subcellular location is the endosome membrane. The protein resides in the early endosome. In terms of biological role, proposed effector of Rab5. Binds to phosphatidylinositol 3-phosphate (PI(3)P). Involved in homotypic early endosome fusion and to a lesser extent in heterotypic fusion of chlathrin-coated vesicles with early endosomes. Involved in macropinocytosis; the function is dependent on Rab5-GTP. Required for correct endosomal localization. Involved in the internalization and trafficking of activated tyrosine kinase receptors such as PDGFRB. Regulates the subcellular localization of the retromer complex in a EHD1-dependent manner. Involved in endosome-to-Golgi transport and biosynthetic transport to late endosomes and lysosomes indicative for a regulation of retromer complex-mediated retrograde transport. The chain is Rabankyrin-5 (ANKFY1) from Homo sapiens (Human).